Consider the following 381-residue polypeptide: 8-amino-7-oxononanoate synthase (381 aa).

Arg27 contributes to the substrate binding site. 105–106 (GY) contacts pyridoxal 5'-phosphate. Substrate is bound at residue His130. Pyridoxal 5'-phosphate is bound by residues Ser176, 201 to 204 (DEAH), and 232 to 235 (TLSK). Position 235 is an N6-(pyridoxal phosphate)lysine (Lys235). Residue Thr345 coordinates substrate.

The protein belongs to the class-II pyridoxal-phosphate-dependent aminotransferase family. BioF subfamily. In terms of assembly, homodimer. Pyridoxal 5'-phosphate is required as a cofactor.

The enzyme catalyses 6-carboxyhexanoyl-[ACP] + L-alanine + H(+) = (8S)-8-amino-7-oxononanoate + holo-[ACP] + CO2. It functions in the pathway cofactor biosynthesis; biotin biosynthesis. Catalyzes the decarboxylative condensation of pimeloyl-[acyl-carrier protein] and L-alanine to produce 8-amino-7-oxononanoate (AON), [acyl-carrier protein], and carbon dioxide. The protein is 8-amino-7-oxononanoate synthase of Mycobacterium avium (strain 104).